We begin with the raw amino-acid sequence, 130 residues long: Small ribosomal subunit protein uS9 (130 aa).

The protein belongs to the universal ribosomal protein uS9 family.

This Geobacillus thermodenitrificans (strain NG80-2) protein is Small ribosomal subunit protein uS9.